The sequence spans 290 residues: 4-hydroxy-tetrahydrodipicolinate synthase (290 aa).

Threonine 44 contacts pyruvate. The active-site Proton donor/acceptor is tyrosine 131. The Schiff-base intermediate with substrate role is filled by lysine 159. Isoleucine 201 serves as a coordination point for pyruvate.

Belongs to the DapA family. Homotetramer; dimer of dimers.

It localises to the cytoplasm. The enzyme catalyses L-aspartate 4-semialdehyde + pyruvate = (2S,4S)-4-hydroxy-2,3,4,5-tetrahydrodipicolinate + H2O + H(+). Its pathway is amino-acid biosynthesis; L-lysine biosynthesis via DAP pathway; (S)-tetrahydrodipicolinate from L-aspartate: step 3/4. In terms of biological role, catalyzes the condensation of (S)-aspartate-beta-semialdehyde [(S)-ASA] and pyruvate to 4-hydroxy-tetrahydrodipicolinate (HTPA). In Jannaschia sp. (strain CCS1), this protein is 4-hydroxy-tetrahydrodipicolinate synthase.